Consider the following 158-residue polypeptide: Dysbindin domain-containing protein 2 (158 aa).

Positions 79 to 158 (FLPCEESSPA…DGGAEPGPCS (80 aa)) are disordered. Residues 106-131 (PTSDRTTSRTSSLSSDSSNLRSPNPS) show a composition bias toward low complexity. Serine 119 and serine 120 each carry phosphoserine. Threonine 137 is subject to Phosphothreonine. At serine 142 the chain carries Phosphoserine. The span at 142-151 (SDEEDGDDGG) shows a compositional bias: acidic residues.

This sequence belongs to the dysbindin family. Monomer. Interacts with CSNK1D and CSNK1E.

In terms of biological role, may modulate the activity of casein kinase-1. Inhibits CSNK1D autophosphorylation (in vitro). The sequence is that of Dysbindin domain-containing protein 2 (Dbndd2) from Mus musculus (Mouse).